Reading from the N-terminus, the 919-residue chain is Chitin synthase 1 (919 aa).

Disordered stretches follow at residues Met1–Thr69 and Asn109–Pro134. The segment covering Gly11–Asp30 has biased composition (low complexity). N-linked (GlcNAc...) asparagine glycosylation is found at Asn187 and Asn556. The next 7 helical transmembrane spans lie at Ile594–Ile614, Leu630–Leu650, Ile668–Leu688, Val713–Ala733, Phe742–Cys762, Leu843–Gly863, and Ile887–Thr919.

This sequence belongs to the chitin synthase family. Class III subfamily.

It localises to the cell membrane. It is found in the cytoplasmic vesicle membrane. The enzyme catalyses [(1-&gt;4)-N-acetyl-beta-D-glucosaminyl](n) + UDP-N-acetyl-alpha-D-glucosamine = [(1-&gt;4)-N-acetyl-beta-D-glucosaminyl](n+1) + UDP + H(+). Its function is as follows. Polymerizes chitin, a structural polymer of the cell wall and septum, by transferring the sugar moiety of UDP-GlcNAc to the non-reducing end of the growing chitin polymer. This chain is Chitin synthase 1, found in Mycosarcoma maydis (Corn smut fungus).